A 628-amino-acid chain; its full sequence is uncharacterized protein (628 aa).

Disordered regions lie at residues 1 to 65 (MDTN…ISSA) and 80 to 125 (SLRN…VSLS). Positions 12–21 (ISPSIASSFP) are enriched in low complexity. Residues 25 to 37 (PFSSQNSTTSNPE) are compositionally biased toward polar residues. Composition is skewed to low complexity over residues 48-64 (SSII…NISS) and 87-102 (SPHI…SSSS). Basic and acidic residues predominate over residues 103-116 (DLDKSMLDEKHPDS). Helical transmembrane passes span 157-177 (IITC…SISL), 203-223 (VGTG…NLLM), 230-250 (LWLS…AVLG), 259-279 (FIAL…GFAF), 294-314 (IGWY…LSAA), 324-344 (LYGY…QGLF), 417-437 (LWPP…LVNY), 454-474 (VSLL…TVLP), 483-503 (MLFF…TTFV), 511-531 (VGLL…MTWV), 542-562 (VGVA…SVVA), and 583-603 (MCGM…VQKF).

This sequence belongs to the major facilitator superfamily. Allantoate permease family.

Its subcellular location is the membrane. This is an uncharacterized protein from Schizosaccharomyces pombe (strain 972 / ATCC 24843) (Fission yeast).